The primary structure comprises 110 residues: Phosphoribosyl-ATP pyrophosphatase (110 aa).

It belongs to the PRA-PH family.

Its subcellular location is the cytoplasm. The catalysed reaction is 1-(5-phospho-beta-D-ribosyl)-ATP + H2O = 1-(5-phospho-beta-D-ribosyl)-5'-AMP + diphosphate + H(+). The protein operates within amino-acid biosynthesis; L-histidine biosynthesis; L-histidine from 5-phospho-alpha-D-ribose 1-diphosphate: step 2/9. The polypeptide is Phosphoribosyl-ATP pyrophosphatase (Stutzerimonas stutzeri (strain A1501) (Pseudomonas stutzeri)).